A 517-amino-acid polypeptide reads, in one-letter code: Ribose import ATP-binding protein RbsA 2 (517 aa).

2 ABC transporter domains span residues 11 to 251 and 263 to 507; these read LEMR…VGRD and YDPG…ALAT. 43-50 contributes to the ATP binding site; it reads GENGAGKS.

The protein belongs to the ABC transporter superfamily. Ribose importer (TC 3.A.1.2.1) family. As to quaternary structure, the complex is composed of an ATP-binding protein (RbsA), two transmembrane proteins (RbsC) and a solute-binding protein (RbsB).

It localises to the cell inner membrane. It catalyses the reaction D-ribose(out) + ATP + H2O = D-ribose(in) + ADP + phosphate + H(+). In terms of biological role, part of the ABC transporter complex RbsABC involved in ribose import. Responsible for energy coupling to the transport system. This Burkholderia pseudomallei (strain 1710b) protein is Ribose import ATP-binding protein RbsA 2.